The following is a 1152-amino-acid chain: Integrin alpha-M (1152 aa).

The first 16 residues, 1–16, serve as a signal peptide directing secretion; it reads MALRVLLLTALTLCHG. Residues 17–1104 lie on the Extracellular side of the membrane; that stretch reads FNLDTENAMT…TKVEPFEVPN (1088 aa). FG-GAP repeat units follow at residues 18-75 and 76-135; these read NLDT…SCEP and IRLQ…QQPQ. Residues Cys-66 and Cys-73 are joined by a disulfide bond. Residue Asn-86 is glycosylated (N-linked (GlcNAc...) asparagine). An intrachain disulfide couples Cys-105 to Cys-123. The region spanning 150–328 is the VWFA domain; the sequence is DIAFLIDGSG…EALKTIQNQL (179 aa). N-linked (GlcNAc...) asparagine glycosylation occurs at Asn-240. FG-GAP repeat units lie at residues 339–390, 391–442, 443–503, 506–564, and 569–629; these read QTGS…STFI, NMTR…TGMW, ESNA…RARW, DAVL…SGIS, and QRIA…FNPR. The N-linked (GlcNAc...) asparagine glycan is linked to Asn-391. Ca(2+)-binding residues include Asp-465, Asp-467, Asn-469, Asp-473, Asp-529, Asn-531, Asp-533, Asp-537, Asp-592, Asp-596, and Asp-600. N-linked (GlcNAc...) asparagine glycosylation is present at Asn-469. A disulfide bond links Cys-654 and Cys-711. 3 N-linked (GlcNAc...) asparagine glycosylation sites follow: Asn-692, Asn-696, and Asn-734. A disulfide bridge links Cys-770 with Cys-776. N-linked (GlcNAc...) asparagine glycosylation occurs at Asn-801. A disulfide bridge connects residues Cys-847 and Cys-864. Asn-880, Asn-900, Asn-911, Asn-940, Asn-946, Asn-978, Asn-993, and Asn-1021 each carry an N-linked (GlcNAc...) asparagine glycan. 2 cysteine pairs are disulfide-bonded: Cys-998–Cys-1022 and Cys-1027–Cys-1032. N-linked (GlcNAc...) asparagine glycosylation is found at Asn-1044, Asn-1050, and Asn-1075. Residues 1105–1128 traverse the membrane as a helical segment; sequence PLPLIVGSSVGGLLLLALITAALY. The Cytoplasmic segment spans residues 1129–1152; it reads KLGFFKRQYKDMMSEGGPPGAEPQ. Positions 1131-1135 match the GFFKR motif motif; sequence GFFKR.

The protein belongs to the integrin alpha chain family. In terms of assembly, heterodimer of an alpha and a beta subunit. ITGAM associates with ITGB2. Found in a complex with CD177 and ITGB2/CD18. Interacts with JAM3. Interacts with THBD. Interacts with complement factor H/CFH; this interaction mediates adhesion of neutrophils to pathogens leading to pathogen clearance. Interacts with TMEM268; this interaction inhibits ITGAM degradation via the endosome-lysosome pathway. In terms of tissue distribution, predominantly expressed in monocytes and granulocytes. Expressed in neutrophils (at protein level).

The protein localises to the cell membrane. It localises to the membrane raft. In terms of biological role, integrin ITGAM/ITGB2 is implicated in various adhesive interactions of monocytes, macrophages and granulocytes as well as in mediating the uptake of complement-coated particles and pathogens. It is identical with CR-3, the receptor for the iC3b fragment of the third complement component. It probably recognizes the R-G-D peptide in C3b. Integrin ITGAM/ITGB2 is also a receptor for fibrinogen, factor X and ICAM1. It recognizes P1 and P2 peptides of fibrinogen gamma chain. Regulates neutrophil migration. In association with beta subunit ITGB2/CD18, required for CD177-PRTN3-mediated activation of TNF primed neutrophils. May regulate phagocytosis-induced apoptosis in extravasated neutrophils. May play a role in mast cell development. Required with TYROBP/DAP12 in microglia to control production of microglial superoxide ions which promote the neuronal apoptosis that occurs during brain development. The protein is Integrin alpha-M (ITGAM) of Homo sapiens (Human).